We begin with the raw amino-acid sequence, 256 residues long: Cell division protein DivIB (256 aa).

Over 1-30 (MNNSKVIKLQDRVPKLKNQKKKNKKNVNHR) the chain is Cytoplasmic. The helical transmembrane segment at 31–51 (LILYISILFLLVLFLIYFRSP) threads the bilayer. Topologically, residues 52-256 (LSNIKKISVF…KELGAEEKKE (205 aa)) are extracellular. A POTRA domain is found at 53–121 (SNIKKISVFG…NNIDIHIEEY (69 aa)).

Belongs to the FtsQ/DivIB family. DivIB subfamily.

Its subcellular location is the cell membrane. Its function is as follows. Cell division protein that may be involved in stabilizing or promoting the assembly of the division complex. In Bacillus cereus (strain ATCC 14579 / DSM 31 / CCUG 7414 / JCM 2152 / NBRC 15305 / NCIMB 9373 / NCTC 2599 / NRRL B-3711), this protein is Cell division protein DivIB.